The sequence spans 690 residues: Protein arginine N-methyltransferase 7 (690 aa).

2 SAM-dependent MTase PRMT-type domains span residues 14-357 and 366-690; these read ENSW…YSLW and AKSV…QKKP.

It belongs to the class I-like SAM-binding methyltransferase superfamily. Protein arginine N-methyltransferase family. PRMT7 subfamily.

Functionally, essential arginine methyltransferase that can both catalyze the formation of omega-N monomethylarginine (MMA) and symmetrical dimethylarginine (sDMA). Specifically mediates the symmetrical dimethylation of arginine residues in the small nuclear ribonucleoproteins SmD1 and SmD3. The sequence is that of Protein arginine N-methyltransferase 7 (Art7) from Drosophila ananassae (Fruit fly).